A 322-amino-acid polypeptide reads, in one-letter code: Probable cell division protein WhiA (322 aa).

The segment at residues 279-312 (SLKELGELWTPPVGKSGVNHRIRKIERLAEKLRS) is a DNA-binding region (H-T-H motif).

It belongs to the WhiA family.

In terms of biological role, involved in cell division and chromosome segregation. The sequence is that of Probable cell division protein WhiA from Desulforamulus reducens (strain ATCC BAA-1160 / DSM 100696 / MI-1) (Desulfotomaculum reducens).